The sequence spans 261 residues: Imidazole glycerol phosphate synthase subunit HisF (261 aa).

Active-site residues include Asp-11 and Asp-130.

The protein belongs to the HisA/HisF family. As to quaternary structure, heterodimer of HisH and HisF.

It localises to the cytoplasm. The enzyme catalyses 5-[(5-phospho-1-deoxy-D-ribulos-1-ylimino)methylamino]-1-(5-phospho-beta-D-ribosyl)imidazole-4-carboxamide + L-glutamine = D-erythro-1-(imidazol-4-yl)glycerol 3-phosphate + 5-amino-1-(5-phospho-beta-D-ribosyl)imidazole-4-carboxamide + L-glutamate + H(+). It functions in the pathway amino-acid biosynthesis; L-histidine biosynthesis; L-histidine from 5-phospho-alpha-D-ribose 1-diphosphate: step 5/9. Functionally, IGPS catalyzes the conversion of PRFAR and glutamine to IGP, AICAR and glutamate. The HisF subunit catalyzes the cyclization activity that produces IGP and AICAR from PRFAR using the ammonia provided by the HisH subunit. The protein is Imidazole glycerol phosphate synthase subunit HisF of Heliobacterium modesticaldum (strain ATCC 51547 / Ice1).